Reading from the N-terminus, the 183-residue chain is Putative manganese efflux pump MntP (183 aa).

The next 6 membrane-spanning stretches (helical) occupy residues 8–28 (IIALSMMALALGMDAFSVALG), 40–60 (FYIGLTIGLFHILMPLAGMAV), 72–92 (ATYAGGALLLWLGGQMIIASF), 108–128 (LFFAFSVSLDSFSVGLSLGIF), 133–153 (MVTILLFGLFSMVLTWVGLFV), and 163–183 (SYSEALGGSILLAFGLKLLFL).

It belongs to the MntP (TC 9.B.29) family.

Its subcellular location is the cell membrane. Functionally, probably functions as a manganese efflux pump. The polypeptide is Putative manganese efflux pump MntP (Geobacillus kaustophilus (strain HTA426)).